The sequence spans 320 residues: 4-hydroxythreonine-4-phosphate dehydrogenase (320 aa).

T132 lines the substrate pocket. Residues H161, H205, and H258 each contribute to the a divalent metal cation site. 3 residues coordinate substrate: K266, N275, and R284.

This sequence belongs to the PdxA family. Homodimer. It depends on a divalent metal cation as a cofactor.

The protein localises to the cytoplasm. The enzyme catalyses 4-(phosphooxy)-L-threonine + NAD(+) = 3-amino-2-oxopropyl phosphate + CO2 + NADH. It participates in cofactor biosynthesis; pyridoxine 5'-phosphate biosynthesis; pyridoxine 5'-phosphate from D-erythrose 4-phosphate: step 4/5. In terms of biological role, catalyzes the NAD(P)-dependent oxidation of 4-(phosphooxy)-L-threonine (HTP) into 2-amino-3-oxo-4-(phosphooxy)butyric acid which spontaneously decarboxylates to form 3-amino-2-oxopropyl phosphate (AHAP). This is 4-hydroxythreonine-4-phosphate dehydrogenase from Aquifex aeolicus (strain VF5).